Reading from the N-terminus, the 144-residue chain is Maximins 3/H16 (144 aa).

A signal peptide spans 1-18; it reads MNFKYIVAVSFLIASAYA. Propeptides lie at residues 19–43 and 73–122; these read RSVQ…REIR and RTAE…KKEK. Isoleucine 143 carries the post-translational modification Isoleucine amide.

This sequence belongs to the bombinin family. In terms of tissue distribution, expressed by the skin glands.

The protein localises to the secreted. Its function is as follows. Maximin-3 shows antibacterial activity against both Gram-positive and Gram-negative bacteria. It also shows antimicrobial activity against the fungus C.albicans, but not against A.flavus nor P.uticale. It has little hemolytic activity. It possess a significant cytotoxicity against tumor cell lines. It possess a significant anti-HIV activity. It shows high spermicidal activity. Maximin-H16 shows antimicrobial activity against bacteria and against the fungus C.albicans. Shows strong hemolytic activity. This chain is Maximins 3/H16, found in Bombina maxima (Giant fire-bellied toad).